Reading from the N-terminus, the 103-residue chain is Large ribosomal subunit protein bL21 (103 aa).

It belongs to the bacterial ribosomal protein bL21 family. As to quaternary structure, part of the 50S ribosomal subunit. Contacts protein L20.

Functionally, this protein binds to 23S rRNA in the presence of protein L20. The chain is Large ribosomal subunit protein bL21 from Mycobacteroides abscessus (strain ATCC 19977 / DSM 44196 / CCUG 20993 / CIP 104536 / JCM 13569 / NCTC 13031 / TMC 1543 / L948) (Mycobacterium abscessus).